We begin with the raw amino-acid sequence, 145 residues long: Putative pre-16S rRNA nuclease (145 aa).

Belongs to the YqgF nuclease family.

Its subcellular location is the cytoplasm. Could be a nuclease involved in processing of the 5'-end of pre-16S rRNA. The chain is Putative pre-16S rRNA nuclease from Thiobacillus denitrificans (strain ATCC 25259 / T1).